The sequence spans 572 residues: Secreted triacylglycerol lipase LIP6 (572 aa).

Positions 1-23 are cleaved as a signal peptide; it reads MYSTSLLRWLVVALVSAVPLVTA. A disulfide bridge links C117 with C291. S202 acts as the Nucleophile in catalysis. D351 is a catalytic residue. An N-linked (GlcNAc...) asparagine glycan is attached at N360. Residue H385 is part of the active site. The segment at 468–572 is disordered; that stretch reads KGGVWNDVLK…SSRRHVARFM (105 aa). Positions 491 to 511 are enriched in basic and acidic residues; it reads PESKKATKKYKSESKAEKKQP. Residues 512–525 show a composition bias toward low complexity; it reads DSIPSSSSKSSSDN. A glycan (N-linked (GlcNAc...) asparagine) is linked at N525. A compositionally biased stretch (basic residues) spans 528–540; it reads AHAKYHAHGHGHG. The span at 541–562 shows a compositional bias: low complexity; the sequence is HASSNSNNGHSHSAKESSTSKG. The segment covering 563-572 has biased composition (basic residues); sequence SSRRHVARFM.

Belongs to the AB hydrolase superfamily. Lipase family. Class Lip subfamily.

Its subcellular location is the secreted. The protein localises to the cell wall. It catalyses the reaction a triacylglycerol + H2O = a diacylglycerol + a fatty acid + H(+). The enzyme catalyses a monoacylglycerol + H2O = glycerol + a fatty acid + H(+). It carries out the reaction a diacylglycerol + H2O = a monoacylglycerol + a fatty acid + H(+). In terms of biological role, secreted lipase involved in Dandruff and seborrheic dermatitis (D/SD) probably via lipase-mediated breakdown of sebaceous lipids and release of irritating free fatty acids. Shows only minimal activity against triolein. Mostly converts monoolein to di- and triolein, while free fatty acids are only produced in low amounts. The polypeptide is Secreted triacylglycerol lipase LIP6 (Malassezia globosa (strain ATCC MYA-4612 / CBS 7966) (Dandruff-associated fungus)).